The chain runs to 239 residues: Probable 2-phosphosulfolactate phosphatase (239 aa).

The protein belongs to the ComB family. The cofactor is Mg(2+).

It catalyses the reaction (2R)-O-phospho-3-sulfolactate + H2O = (2R)-3-sulfolactate + phosphate. This chain is Probable 2-phosphosulfolactate phosphatase, found in Clostridium botulinum (strain Loch Maree / Type A3).